Consider the following 208-residue polypeptide: Small ribosomal subunit protein uS4 (208 aa).

The S4 RNA-binding domain maps to 95 to 155 (TRLDALVLRA…AKSQTMVPFQ (61 aa)).

It belongs to the universal ribosomal protein uS4 family. As to quaternary structure, part of the 30S ribosomal subunit. Contacts protein S5. The interaction surface between S4 and S5 is involved in control of translational fidelity.

One of the primary rRNA binding proteins, it binds directly to 16S rRNA where it nucleates assembly of the body of the 30S subunit. Its function is as follows. With S5 and S12 plays an important role in translational accuracy. This is Small ribosomal subunit protein uS4 from Bifidobacterium adolescentis (strain ATCC 15703 / DSM 20083 / NCTC 11814 / E194a).